Here is a 122-residue protein sequence, read N- to C-terminus: Large ribosomal subunit protein uL14 (122 aa).

It belongs to the universal ribosomal protein uL14 family. Part of the 50S ribosomal subunit. Forms a cluster with proteins L3 and L19. In the 70S ribosome, L14 and L19 interact and together make contacts with the 16S rRNA in bridges B5 and B8.

Its function is as follows. Binds to 23S rRNA. Forms part of two intersubunit bridges in the 70S ribosome. The chain is Large ribosomal subunit protein uL14 from Mycoplasmopsis agalactiae (strain NCTC 10123 / CIP 59.7 / PG2) (Mycoplasma agalactiae).